Reading from the N-terminus, the 639-residue chain is Chaperone protein HtpG (639 aa).

The a; substrate-binding stretch occupies residues 1 to 347; sequence MSHQETHGFQ…SNDLPLNVSR (347 aa). The interval 348–564 is b; that stretch reads EILQDNKITT…AGEMSSQMIK (217 aa). A c region spans residues 565–639; sequence LMQAAGQAVT…MNKMLLASVK (75 aa).

It belongs to the heat shock protein 90 family. As to quaternary structure, homodimer.

Its subcellular location is the cytoplasm. Its function is as follows. Molecular chaperone. Has ATPase activity. This Shewanella loihica (strain ATCC BAA-1088 / PV-4) protein is Chaperone protein HtpG.